The chain runs to 641 residues: Epsin-2 (641 aa).

A 1,2-diacyl-sn-glycero-3-phospho-(1D-myo-inositol-4,5-bisphosphate)-binding residues include Arg-8, Lys-11, Arg-25, Asn-30, Arg-63, and His-73. In terms of domain architecture, ENTH spans Asn-12–Arg-144. Arg-153 and Gln-156 each carry phosphoserine. Over residues Ser-163 to His-181 the composition is skewed to polar residues. Disordered regions lie at residues Ser-163–Leu-214 and Arg-255–Glu-275. An Omega-N-methylarginine modification is found at Arg-170. Residues Ser-173, Ser-192, and Ser-195 each carry the phosphoserine modification. Over residues Pro-259–Ser-273 the composition is skewed to polar residues. UIM domains are found at residues Glu-275–Glu-294 and Gly-300–Ile-319. The segment at Ala-340–Ala-425 is disordered. Tandem repeats lie at residues Glu-352–Trp-354, Asn-364–Trp-366, Asp-377–Trp-379, Asp-391–Trp-393, Asp-409–Trp-411, and Asp-427–Trp-429. The segment at Glu-352–Phe-639 is 6 X 3 AA repeats of [DE]-P-W. The span at Ser-408–Ala-421 shows a compositional bias: low complexity. The segment at Thr-470–Phe-512 is disordered. Over residues Glu-472 to Arg-506 the composition is skewed to polar residues. Position 486 is a phosphoserine (Ser-486). At Thr-508 the chain carries Phosphothreonine. A run of 2 repeats spans residues Asn-537–Phe-539 and Asn-552–Phe-554. The tract at residues Asn-537–Phe-639 is 3 X 3 AA repeats of N-P-F. Ser-570 carries the phosphoserine modification. Repeat 3 spans residues Asn-637–Phe-639.

Belongs to the epsin family. As to quaternary structure, binds EPS15. Interacts with ITSN1. Binds AP-2 and clathrin. Interacts with UBQLN2. Post-translationally, ubiquitinated. Highest expression is found in brain. Detected at lower levels in lung and liver.

It is found in the cytoplasm. Its subcellular location is the cytoplasmic vesicle. The protein localises to the clathrin-coated vesicle. Plays a role in the formation of clathrin-coated invaginations and endocytosis. In Homo sapiens (Human), this protein is Epsin-2 (EPN2).